Consider the following 72-residue polypeptide: Translation initiation factor IF-1 (72 aa).

Positions 1–72 constitute an S1-like domain; it reads MAKEDTIQMQ…TRARIVFRAR (72 aa).

The protein belongs to the IF-1 family. In terms of assembly, component of the 30S ribosomal translation pre-initiation complex which assembles on the 30S ribosome in the order IF-2 and IF-3, IF-1 and N-formylmethionyl-tRNA(fMet); mRNA recruitment can occur at any time during PIC assembly.

It is found in the cytoplasm. Functionally, one of the essential components for the initiation of protein synthesis. Stabilizes the binding of IF-2 and IF-3 on the 30S subunit to which N-formylmethionyl-tRNA(fMet) subsequently binds. Helps modulate mRNA selection, yielding the 30S pre-initiation complex (PIC). Upon addition of the 50S ribosomal subunit IF-1, IF-2 and IF-3 are released leaving the mature 70S translation initiation complex. This Neisseria gonorrhoeae (strain ATCC 700825 / FA 1090) protein is Translation initiation factor IF-1.